Reading from the N-terminus, the 82-residue chain is Apovitellenin-1 (82 aa).

This sequence belongs to the apovitellenin family. Monomer. As to expression, found in egg yolk and in plasma.

Protein component of the very low density lipoprotein (VLDL) of egg-laying females. Potent lipoprotein lipase inhibitor, preventing the loss of triglycerides from VLDL on their way from the liver to the growing oocytes. The chain is Apovitellenin-1 from Anas platyrhynchos (Mallard).